The sequence spans 429 residues: Cyclin-B2-3 (429 aa).

A compositionally biased stretch (basic and acidic residues) spans 86–101 (ADHKPHIRDEETKKPD). Residues 86–109 (ADHKPHIRDEETKKPDSVSSEEPE) are disordered.

Belongs to the cyclin family. Cyclin AB subfamily.

The protein is Cyclin-B2-3 (CYCB2-3) of Arabidopsis thaliana (Mouse-ear cress).